The sequence spans 205 residues: High frequency lysogenization protein HflD homolog (205 aa).

Belongs to the HflD family.

The protein resides in the cytoplasm. It localises to the cell inner membrane. This Hahella chejuensis (strain KCTC 2396) protein is High frequency lysogenization protein HflD homolog.